A 623-amino-acid chain; its full sequence is Phosphoglucomutase, chloroplastic (623 aa).

The N-terminal 63 residues, 1–63, are a transit peptide targeting the chloroplast; that stretch reads MTSTYTRFDT…SSSSSSVVAG (63 aa). Residues R88 and S181 each contribute to the alpha-D-glucose 1,6-bisphosphate site. The active-site Phosphoserine intermediate is S181. Positions 181, 346, 348, and 350 each coordinate Mg(2+). Position 181 is a phosphoserine (S181). Alpha-D-glucose 1,6-bisphosphate contacts are provided by D350, R351, T414, E433, S435, and K446.

This sequence belongs to the phosphohexose mutase family. As to quaternary structure, monomer. It depends on Mg(2+) as a cofactor. Expressed in flowers, siliques and germinating seeds.

The protein resides in the plastid. It is found in the chloroplast. The catalysed reaction is alpha-D-glucose 1-phosphate = alpha-D-glucose 6-phosphate. It carries out the reaction O-phospho-L-seryl-[protein] + alpha-D-glucose 1-phosphate = alpha-D-glucose 1,6-bisphosphate + L-seryl-[protein]. The enzyme catalyses alpha-D-glucose 1,6-bisphosphate + L-seryl-[protein] = O-phospho-L-seryl-[protein] + alpha-D-glucose 6-phosphate. Inhibited by the Calvin cycle intermediates fructose-1,6-bisphosphate and ribulose-1,5-bisphosphate. Its function is as follows. Catalyzes the reversible isomerization of alpha-D-glucose 1-phosphate to alpha-D-glucose 6-phosphate. The mechanism proceeds via the intermediate compound alpha-D-glucose 1,6-bisphosphate. This enzyme participates in both the breakdown and synthesis of glucose. Factor that affects seed oil content. Accumulated starch in young embryos may play an important role in providing carbon resources for seed storage lipid biosynthesis in oilseed plants. Promotes gravitropic responses, negative in shoots but positive in roots, by facilitating starch granules (statoliths) formation in hypocotyls and roots columella. In Arabidopsis thaliana (Mouse-ear cress), this protein is Phosphoglucomutase, chloroplastic.